Consider the following 154-residue polypeptide: uncharacterized protein (154 aa).

The next 4 membrane-spanning stretches (helical) occupy residues 39–61 (LLIFGSIAIAYTVIYISGLFFAR), 65–87 (LPYIRKILEIGISVIFYFLVSLL), 94–113 (VESLLLLKTLFLVQTIRVFI), and 128–150 (LLINIFSILGGISFFIIKLSPFT).

The protein localises to the cell membrane. This is an uncharacterized protein from Aquifex aeolicus (strain VF5).